The following is a 738-amino-acid chain: Pentatricopeptide repeat-containing protein At5g65570 (738 aa).

PPR repeat units lie at residues 98–128, 129–163, 164–198, 200–230, 231–265, 266–300, 301–331, 332–366, 367–401, 402–432, 433–467, 468–502, and 503–537; these read AEIS…MSER, HIVT…NVLP, DEYT…GLEV, NVFV…VEEK, DVVL…KVQP, NEYT…GFES, ALAS…IEYP, NQVS…SIKP, NSFT…GFDR, DKYA…LSEV, DVIS…GLQP, NDVT…KIML, and TNDH…DLVL. The type E motif stretch occupies residues 537-612; it reads LWRTLLSACK…NPAMSWVEIN (76 aa). The type E(+) motif stretch occupies residues 613–644; it reads KETHTFMAGDLFSHPNSEQILENLEELIKKSK. The interval 645 to 738 is type DYW motif; it reads DLGYVEDKSC…DGSCSCGDYW (94 aa).

This sequence belongs to the PPR family. PCMP-H subfamily.

The polypeptide is Pentatricopeptide repeat-containing protein At5g65570 (PCMP-H47) (Arabidopsis thaliana (Mouse-ear cress)).